The following is a 402-amino-acid chain: MSVTLGTPLQSSAFKVLLLGSGELGKEVVISLQRLGVEVHAADRYDHAPAMQVAHFSYVLNMADPAQLKQLIEKVKPNLIVPEIEAIATEVLLEIEANKTATVIPSAKAVNLTMNREGIRRLAAEELGLPTSAYRFADTLESFRAACDDIGYPNFVKPVMSSSGKGQSRVKSFDEVDAAWEYAMQGGRVNQGTVIIESQIDFDFEITLLTVRAKNPETGEIETHYCDPIGHRQDAGDYVESWQPQPMTPAALEEAKRIANKVTTALGGCGIFGVELFIKGDKVWFSEVSPRPHDTGLVTLASQFQSEFELHARAILGLPVNTARHSVAASAVIYAGVDANNLSYSNLNVALAHPDTDLRLFGKPEGFKRRRMGVATARAENTDLARTLAKETADQVSVQTNS.

N(1)-(5-phospho-beta-D-ribosyl)glycinamide contacts are provided by residues 23-24 (EL) and glutamate 83. Residues arginine 116, lysine 157, 162-167 (SSGKGQ), 197-200 (ESQI), and glutamate 205 each bind ATP. The ATP-grasp domain maps to 121 to 316 (RLAAEELGLP…EFELHARAIL (196 aa)). Mg(2+)-binding residues include glutamate 275 and glutamate 287. Residues aspartate 294, lysine 363, and 370–371 (RR) contribute to the N(1)-(5-phospho-beta-D-ribosyl)glycinamide site.

It belongs to the PurK/PurT family. As to quaternary structure, homodimer.

It catalyses the reaction N(1)-(5-phospho-beta-D-ribosyl)glycinamide + formate + ATP = N(2)-formyl-N(1)-(5-phospho-beta-D-ribosyl)glycinamide + ADP + phosphate + H(+). The protein operates within purine metabolism; IMP biosynthesis via de novo pathway; N(2)-formyl-N(1)-(5-phospho-D-ribosyl)glycinamide from N(1)-(5-phospho-D-ribosyl)glycinamide (formate route): step 1/1. Functionally, involved in the de novo purine biosynthesis. Catalyzes the transfer of formate to 5-phospho-ribosyl-glycinamide (GAR), producing 5-phospho-ribosyl-N-formylglycinamide (FGAR). Formate is provided by PurU via hydrolysis of 10-formyl-tetrahydrofolate. The chain is Formate-dependent phosphoribosylglycinamide formyltransferase from Acinetobacter baumannii (strain ATCC 17978 / DSM 105126 / CIP 53.77 / LMG 1025 / NCDC KC755 / 5377).